The primary structure comprises 161 residues: MKHLPKHLRPRWRYLAVGLESWPDADIDRRAFQRELWFAAQNLIGDAGSAALDGSVLHFRFEDGDGEAVIRARRGEVDALRAVLATLSTVDGHPLGVVVRGVSGTVRACEEKYIRGPQEGTEERTVAFAGADRPAVVRNDRVTVELSGGPVGATALDIRDN.

This sequence belongs to the eukaryotic/archaeal RNase P protein component 2 family. As to quaternary structure, consists of a catalytic RNA component and at least 4-5 protein subunits.

The protein localises to the cytoplasm. The enzyme catalyses Endonucleolytic cleavage of RNA, removing 5'-extranucleotides from tRNA precursor.. In terms of biological role, part of ribonuclease P, a protein complex that generates mature tRNA molecules by cleaving their 5'-ends. In Natronomonas pharaonis (strain ATCC 35678 / DSM 2160 / CIP 103997 / JCM 8858 / NBRC 14720 / NCIMB 2260 / Gabara) (Halobacterium pharaonis), this protein is Ribonuclease P protein component 2.